A 739-amino-acid chain; its full sequence is Probable endo-1,3(4)-beta-glucanase An02g00850 (739 aa).

A signal peptide spans 1–24 (MPTSTLLWSVGSLALSSMVLPAAA). The GH16 domain maps to 31–283 (ETWKGEDFLT…WAGGVYSTSG (253 aa)). N-linked (GlcNAc...) asparagine glycosylation is found at N59 and N74. The active-site Nucleophile is the E140. E145 serves as the catalytic Proton donor. N396 is a glycosylation site (N-linked (GlcNAc...) asparagine). Composition is skewed to low complexity over residues 431–442 (SEATEASNSEGS), 452–499 (TGAS…AGAT), and 507–522 (GASG…SAAA). Residues 431 to 718 (SEATEASNSE…TPSTPVFTGG (288 aa)) are disordered. 2 N-linked (GlcNAc...) asparagine glycosylation sites follow: N459 and N482. Residues 523 to 532 (TPSNVSSTGA) are compositionally biased toward polar residues. Residues N526 and N537 are each glycosylated (N-linked (GlcNAc...) asparagine). Residues 539–548 (SEDSSASSEA) show a composition bias toward polar residues. The segment covering 561–587 (GASAEANGNDSASSNAATASNVSGASA) has biased composition (low complexity). N-linked (GlcNAc...) asparagine glycans are attached at residues N569, N581, N592, and N620. A compositionally biased stretch (low complexity) spans 597–641 (ASAGANAGSSAAPSSVSGASAEANGSEGSSSHSSGSQAGAHSYGS). Polar residues predominate over residues 654 to 673 (PSSSSHAFATAPSSTGSSRV). Positions 674–713 (PTSAAAANNAAAATQGSSASGSNSGSSGHGSSSATTPSTP) are enriched in low complexity. Residue G717 is the site of GPI-anchor amidated glycine attachment. Residues 718–739 (GANKLTLGASSVLSVLAFALLA) constitute a propeptide, removed in mature form.

This sequence belongs to the glycosyl hydrolase 16 family.

It is found in the cell membrane. The enzyme catalyses Endohydrolysis of (1-&gt;3)- or (1-&gt;4)-linkages in beta-D-glucans when the glucose residue whose reducing group is involved in the linkage to be hydrolyzed is itself substituted at C-3.. Mixed-linked glucanase involved in the degradation of complex natural cellulosic substrates. The sequence is that of Probable endo-1,3(4)-beta-glucanase An02g00850 from Aspergillus niger (strain ATCC MYA-4892 / CBS 513.88 / FGSC A1513).